Reading from the N-terminus, the 270-residue chain is Regulatory protein RecX (270 aa).

This sequence belongs to the RecX family.

It is found in the cytoplasm. Modulates RecA activity. This chain is Regulatory protein RecX, found in Bacillus cytotoxicus (strain DSM 22905 / CIP 110041 / 391-98 / NVH 391-98).